We begin with the raw amino-acid sequence, 270 residues long: Phospholysine phosphohistidine inorganic pyrophosphate phosphatase (270 aa).

Residues D17 and S19 each coordinate Mg(2+). Substrate contacts are provided by residues 17–19, 54–55, and K189; these read DIS and TN. A Mg(2+)-binding site is contributed by D214.

It belongs to the HAD-like hydrolase superfamily. In terms of assembly, homodimer. The cofactor is Mg(2+). Detected in liver (at protein level).

The protein localises to the cytoplasm. Its subcellular location is the nucleus. It carries out the reaction diphosphate + H2O = 2 phosphate + H(+). Its function is as follows. Phosphatase that hydrolyzes imidodiphosphate, 3-phosphohistidine and 6-phospholysine. Has broad substrate specificity and can also hydrolyze inorganic diphosphate, but with lower efficiency. The sequence is that of Phospholysine phosphohistidine inorganic pyrophosphate phosphatase (LHPP) from Bos taurus (Bovine).